Reading from the N-terminus, the 288-residue chain is Tryptophan 2,3-dioxygenase (288 aa).

Substrate-binding positions include 57 to 61, Tyr119, and Arg123; that span reads FIIQH. His246 lines the heme pocket. Thr260 provides a ligand contact to substrate.

Belongs to the tryptophan 2,3-dioxygenase family. Homotetramer. It depends on heme as a cofactor.

The enzyme catalyses L-tryptophan + O2 = N-formyl-L-kynurenine. The protein operates within amino-acid degradation; L-tryptophan degradation via kynurenine pathway; L-kynurenine from L-tryptophan: step 1/2. In terms of biological role, heme-dependent dioxygenase that catalyzes the oxidative cleavage of the L-tryptophan (L-Trp) pyrrole ring and converts L-tryptophan to N-formyl-L-kynurenine. Catalyzes the oxidative cleavage of the indole moiety. The chain is Tryptophan 2,3-dioxygenase from Pseudomonas aeruginosa (strain UCBPP-PA14).